Reading from the N-terminus, the 99-residue chain is UPF0235 protein Avin_03050 (99 aa).

The segment at 66–99 (VSLESGESNRQKRVRIRRPRQLPALPGLAPRPDA) is disordered. The segment covering 76–85 (QKRVRIRRPR) has biased composition (basic residues).

This sequence belongs to the UPF0235 family.

The chain is UPF0235 protein Avin_03050 from Azotobacter vinelandii (strain DJ / ATCC BAA-1303).